Reading from the N-terminus, the 141-residue chain is ATP synthase epsilon chain (141 aa).

Belongs to the ATPase epsilon chain family. F-type ATPases have 2 components, CF(1) - the catalytic core - and CF(0) - the membrane proton channel. CF(1) has five subunits: alpha(3), beta(3), gamma(1), delta(1), epsilon(1). CF(0) has three main subunits: a, b and c.

It localises to the cell inner membrane. Its function is as follows. Produces ATP from ADP in the presence of a proton gradient across the membrane. This Teredinibacter turnerae (strain ATCC 39867 / T7901) protein is ATP synthase epsilon chain.